The sequence spans 91 residues: Small ribosomal subunit protein bS18 (91 aa).

It belongs to the bacterial ribosomal protein bS18 family. In terms of assembly, part of the 30S ribosomal subunit. Forms a tight heterodimer with protein bS6.

Functionally, binds as a heterodimer with protein bS6 to the central domain of the 16S rRNA, where it helps stabilize the platform of the 30S subunit. This chain is Small ribosomal subunit protein bS18, found in Gluconacetobacter diazotrophicus (strain ATCC 49037 / DSM 5601 / CCUG 37298 / CIP 103539 / LMG 7603 / PAl5).